Reading from the N-terminus, the 55-residue chain is Ovomucoid (55 aa).

In terms of domain architecture, Kazal-like spans 5-55 (VDCSEHPKPACTLDYRPICGSDSKTYSNKCDFCNAVMDSNGTLTLSHFGKC). Disulfide bonds link cysteine 7–cysteine 37, cysteine 15–cysteine 34, and cysteine 23–cysteine 55. Asparagine 44 is a glycosylation site (N-linked (GlcNAc...) asparagine).

It localises to the secreted. The polypeptide is Ovomucoid (Dacelo novaeguineae (Laughing kookaburra)).